We begin with the raw amino-acid sequence, 218 residues long: Riboflavin kinase (218 aa).

Residues 1 to 27 (MRPDGPRDPVAGPDSGPEPPYPVRLSG) are disordered. Mg(2+) contacts are provided by Thr-44 and Asn-46. Residue Glu-120 is the Nucleophile of the active site.

This sequence belongs to the flavokinase family. The cofactor is Zn(2+). Mg(2+) is required as a cofactor.

It catalyses the reaction riboflavin + ATP = FMN + ADP + H(+). Its pathway is cofactor biosynthesis; FMN biosynthesis; FMN from riboflavin (ATP route): step 1/1. Catalyzes the phosphorylation of riboflavin (vitamin B2) to form flavin mononucleotide (FMN) coenzyme. This chain is Riboflavin kinase (fmn1), found in Neosartorya fischeri (strain ATCC 1020 / DSM 3700 / CBS 544.65 / FGSC A1164 / JCM 1740 / NRRL 181 / WB 181) (Aspergillus fischerianus).